We begin with the raw amino-acid sequence, 145 residues long: Protein phosphatase 1 regulatory subunit 14D (145 aa).

The span at 1–14 (MLSSSPASCTSPSP) shows a compositional bias: low complexity. Positions 1–59 (MLSSSPASCTSPSPDGENPCKKVHWASGRRRTSSTDSESKSHPDSSKIPRSRRPSRLTV) are disordered. Positions 21 to 25 (KKVHW) are interaction with protein phosphatase 1. Positions 21 to 32 (KKVHWASGRRRT) are enriched in basic residues. A compositionally biased stretch (basic and acidic residues) spans 37–47 (SESKSHPDSSK). Thr-58 carries the post-translational modification Phosphothreonine.

It belongs to the PP1 inhibitor family. In terms of processing, phosphorylated on several residues. In terms of tissue distribution, detected in colon, intestine, kidney and brain cortex.

Its subcellular location is the cytoplasm. In terms of biological role, inhibitor of PPP1CA. Has inhibitory activity only when phosphorylated, creating a molecular switch for regulating the phosphorylation status of PPP1CA substrates and smooth muscle contraction. This chain is Protein phosphatase 1 regulatory subunit 14D (PPP1R14D), found in Homo sapiens (Human).